Reading from the N-terminus, the 328-residue chain is Opticin (328 aa).

The first 19 residues, 1–19 (MKFLAFLSLLSLVLQKAET), serve as a signal peptide directing secretion. N46 carries an N-linked (GlcNAc...) asparagine glycan. The residue at position 69 (Y69) is a Sulfotyrosine. N-linked (GlcNAc...) asparagine glycans are attached at residues N80 and N101. The LRRNT domain maps to 112 to 149 (LLNSQSSHGLPTCLVCVCLGSSVYCDDADLENIPPLPQ). LRR repeat units follow at residues 150–171 (MTTY…DFKG), 174–195 (KLRR…ALRL), 198–219 (ALQD…PSGI), 244–265 (KLQF…LPLS), 266–286 (LRSL…TFCD), and 296–316 (QLED…PEAY). Cysteines 285 and 318 form a disulfide. N308 is a glycosylation site (N-linked (GlcNAc...) asparagine).

It belongs to the small leucine-rich proteoglycan (SLRP) family. SLRP class III subfamily. As to quaternary structure, homodimer. Post-translationally, O-glycosylated. Sulfated on tyrosine residues. In terms of processing, proteolytically cleaved by MMP1, MMP2, MMP3, MMP7, MMP8, MMP9, ADAMTS4, and ADAMTS5. Proteolytically cleaved by MMP13. Expressed in cartilage (at protein level). Expressed in the vitreous collagen, inner limiting membrane, lens capsule, trabecular meshwork, anterior surface of the iris, the area adjacent to the nonpigmented ciliary epithelium, and weakly expressed in the retina of the eye (at protein level). Expressed in the nonpigmented ciliary epithelium of the eye.

It localises to the secreted. The protein resides in the extracellular space. The protein localises to the extracellular matrix. Its function is as follows. Inhibits angiogenesis in the vitreous humor of the eye, and therefore represses neovascularization. Binds collagen fibrils. May be involved in collagen fiber organization via regulation of other members of the small leucine-rich repeat proteoglycan superfamily. The protein is Opticin (Optc) of Mus musculus (Mouse).